Consider the following 354-residue polypeptide: Protein sex-lethal (354 aa).

The interval 1 to 21 (MYGNNNPGSNNNNGGYPPYGY) is disordered. RRM domains are found at residues 125-203 (TNLI…YARP) and 211-291 (TNLY…LAEE).

As to quaternary structure, part of a complex containing fl(2)d, Sxl and vir. Part of a complex composed of at least mei-P26, bam, bgcn and Sxl; this complex is involved in translational repression of nanos mRNA. interacts with mei-p26. Interacts with nito. Interacts with Unr; cooperates with Unr to prevent translation of msl-2 transcripts. Interacts with how; promoting nuclear retention of msl-2 transcripts. Expressed in somatic tissues, but not in the pole cells, which are the precursors of the germline. Expressed in the anterior of the germarium.

The protein resides in the nucleus. It is found in the cytoplasm. Its function is as follows. Sex determination switch protein, which controls sexual development and dosage compensation in females. Sxl protein is only active in females: it is inactive in males throughout development. Acts as a mRNA-binding protein, which specifically binds to a subset of pre-mRNAs and mRNAs and regulates their processing and/or translation. Binds nanos mRNA and is involved in bam-bgcn mediated repression of nanos mRNA translation. Promotes sexual development by controlling the female-specific alternative splicing of the transformer (tra) pre-mRNA: binds tightly to a characteristic uridine-rich polypyrimidine tract at the non-sex specific 3' splice site in one of the tra introns, preventing the general splicing factor U2AF from binding to this site and forcing it to bind to the female-specific 3' splice site. Acts as an inhibitor of dosage compensation in females by preventing production of msl-2 protein, an essential component of the MSL complex, the complex that mediates X-chromosome dosage compensation. Specifically binds to uridine stretches in both the 5'- and 3'-UTR of msl-2 transcripts. Sxl first acts at the splicing level by promoting retention of an intron in the 5' UTR of msl-2 pre-mRNA. The retained intron contains Sxl-binding sites that are required for subsequent steps of repression: after msl-2 mRNA export into the cytoplasm, Sxl coordinates its translational repression by targeting early steps of translation initiation. Together with how, Sxl also prevents production of msl-2 protein by preventing nuclear export of msl-2 transcripts. In terms of biological role, embryo-specific product, which is expressed early only in female embryos and specifies female-adult specific splicing. In Drosophila melanogaster (Fruit fly), this protein is Protein sex-lethal.